A 476-amino-acid chain; its full sequence is Glycogen synthase (476 aa).

K15 lines the ADP-alpha-D-glucose pocket.

Belongs to the glycosyltransferase 1 family. Bacterial/plant glycogen synthase subfamily.

It catalyses the reaction [(1-&gt;4)-alpha-D-glucosyl](n) + ADP-alpha-D-glucose = [(1-&gt;4)-alpha-D-glucosyl](n+1) + ADP + H(+). Its pathway is glycan biosynthesis; glycogen biosynthesis. Functionally, synthesizes alpha-1,4-glucan chains using ADP-glucose. The chain is Glycogen synthase from Lactobacillus acidophilus (strain ATCC 700396 / NCK56 / N2 / NCFM).